The following is a 738-amino-acid chain: DNA ligase (738 aa).

Residues 48-52 (DVVYD), 97-98 (SL), and Glu136 contribute to the NAD(+) site. Residue Lys138 is the N6-AMP-lysine intermediate of the active site. NAD(+)-binding residues include Arg159, Glu196, Lys356, and Lys380. Residues Cys474, Cys477, Cys492, and Cys497 each coordinate Zn(2+). The 80-residue stretch at 659–738 (QLPQPLAGKT…SQLLELLEET (80 aa)) folds into the BRCT domain.

It belongs to the NAD-dependent DNA ligase family. LigA subfamily. Requires Mg(2+) as cofactor. The cofactor is Mn(2+).

The enzyme catalyses NAD(+) + (deoxyribonucleotide)n-3'-hydroxyl + 5'-phospho-(deoxyribonucleotide)m = (deoxyribonucleotide)n+m + AMP + beta-nicotinamide D-nucleotide.. DNA ligase that catalyzes the formation of phosphodiester linkages between 5'-phosphoryl and 3'-hydroxyl groups in double-stranded DNA using NAD as a coenzyme and as the energy source for the reaction. It is essential for DNA replication and repair of damaged DNA. This is DNA ligase from Cyanothece sp. (strain PCC 7425 / ATCC 29141).